Consider the following 478-residue polypeptide: Protein nucleotidyltransferase YdiU (478 aa).

Gly84, Gly86, Arg87, Lys107, Asp119, Gly120, Arg170, and Arg177 together coordinate ATP. Residue Asp246 is the Proton acceptor of the active site. Positions 247 and 256 each coordinate Mg(2+). An ATP-binding site is contributed by Asp256.

The protein belongs to the SELO family. Requires Mg(2+) as cofactor. Mn(2+) is required as a cofactor.

The enzyme catalyses L-seryl-[protein] + ATP = 3-O-(5'-adenylyl)-L-seryl-[protein] + diphosphate. It catalyses the reaction L-threonyl-[protein] + ATP = 3-O-(5'-adenylyl)-L-threonyl-[protein] + diphosphate. It carries out the reaction L-tyrosyl-[protein] + ATP = O-(5'-adenylyl)-L-tyrosyl-[protein] + diphosphate. The catalysed reaction is L-histidyl-[protein] + UTP = N(tele)-(5'-uridylyl)-L-histidyl-[protein] + diphosphate. The enzyme catalyses L-seryl-[protein] + UTP = O-(5'-uridylyl)-L-seryl-[protein] + diphosphate. It catalyses the reaction L-tyrosyl-[protein] + UTP = O-(5'-uridylyl)-L-tyrosyl-[protein] + diphosphate. In terms of biological role, nucleotidyltransferase involved in the post-translational modification of proteins. It can catalyze the addition of adenosine monophosphate (AMP) or uridine monophosphate (UMP) to a protein, resulting in modifications known as AMPylation and UMPylation. The polypeptide is Protein nucleotidyltransferase YdiU (Escherichia coli O17:K52:H18 (strain UMN026 / ExPEC)).